Here is a 152-residue protein sequence, read N- to C-terminus: MIDREQIVRIVSDYLSTGETFLVEVAIHPGNRILVELDSAQGVCIDECVALSRHIESQVDRDLEDYELEVGSTGLTSPLKVMRQWENCIDSELSVLLTNGMKETGRLITVAPEAIKLEVVRMVKPEGAKRKKPETQELTIVMADIKQAVRII.

Belongs to the RimP family.

It is found in the cytoplasm. Functionally, required for maturation of 30S ribosomal subunits. In Porphyromonas gingivalis (strain ATCC 33277 / DSM 20709 / CIP 103683 / JCM 12257 / NCTC 11834 / 2561), this protein is Ribosome maturation factor RimP.